A 442-amino-acid chain; its full sequence is Betaine reductase complex component B subunit alpha (442 aa).

As to quaternary structure, heterotetramer of two alpha and two beta subunits. Component of the betaine reductase complex, together with components A and C. PB is substrate specific.

The catalysed reaction is acetyl phosphate + trimethylamine + [thioredoxin]-disulfide + H2O = glycine betaine + [thioredoxin]-dithiol + phosphate + H(+). In terms of biological role, in the first step of betaine reductase, the substrate is bound to component PB via a Schiff base intermediate. Then the PB-activated substrate is nucleophilically attacked by the selenol anion of component PA to transform it to a carboxymethylated selenoether and the respective amine. By action of component PC, acetyl phosphate is formed, leaving component PA in its oxidized state. Finally component PA becomes reduced by the thioredoxin system to start a new catalytic cycle of reductive deamination. The chain is Betaine reductase complex component B subunit alpha (grdI) from Peptoclostridium acidaminophilum (Eubacterium acidaminophilum).